A 392-amino-acid polypeptide reads, in one-letter code: Putative non-inhibitory serpin-10 (392 aa).

The tract at residues 333–357 (GTTAVEATYSCCSPTYSGPESPKPR) is RCL.

This sequence belongs to the serpin family.

The sequence is that of Putative non-inhibitory serpin-10 from Oryza sativa subsp. japonica (Rice).